A 47-amino-acid chain; its full sequence is Large ribosomal subunit protein bL33 (47 aa).

The protein belongs to the bacterial ribosomal protein bL33 family.

This Staphylococcus saprophyticus protein is Large ribosomal subunit protein bL33.